We begin with the raw amino-acid sequence, 356 residues long: Probable scoulerine-9-O-methyltransferase OMT2B (356 aa).

Met-173 contacts S-adenosyl-L-methionine. Asp-176 contributes to the substrate binding site. Residues Thr-177, Gly-202, Asp-225, 245–246 (DI), and Lys-259 contribute to the S-adenosyl-L-methionine site. 260–264 (YVLHN) lines the substrate pocket. His-263 serves as the catalytic Proton acceptor.

This sequence belongs to the class I-like SAM-binding methyltransferase superfamily. Cation-independent O-methyltransferase family. COMT subfamily.

The enzyme catalyses (S)-scoulerine + S-adenosyl-L-methionine = (S)-tetrahydrocolumbamine + S-adenosyl-L-homocysteine + H(+). It functions in the pathway alkaloid biosynthesis. Functionally, methyltransferase involved in the biosynthesis of the benzylisoquinoline alkaloid noscapine. Catalyzes the conversion of (S)-scoulerine to (S)-tetrahydrocolumbamine. The heterodimers OMT2B-SOMT3 and OMT2B-6OMT do not possess 3-O-acetyl-4'-O-demethylpapaveroxine 4'-O-methyltransferase activity. The polypeptide is Probable scoulerine-9-O-methyltransferase OMT2B (Papaver somniferum (Opium poppy)).